Reading from the N-terminus, the 510-residue chain is MILVLASLFAVLILNVLLWRWLKASACKAQRLPPGPPRLPILGNLLQLGPLPHRDLASLCDKYGPLVYLRLGNVDAITTNDPDTIREILLRQDDVFSSRPKTLAAVHLAYGCGDVALAPMGPHWKRMRRICMEHLLTTKRLESFTTQRAEEARYLIRDVFKRSETGKPINLKEVLGAFSMNNVTRMLLGKQFFGPGSLVSPKEAQEFLHITHKLFWLLGVIYLGDYLPFWRWVDPSGCEKEMRDVEKRVDEFHTKIIDEHRRAKLEDEDKNGDMDFVDVLLSLPGENGKAHMEDVEIKALIQDMIAAATDTSAVTNEWAMAEAIKQPRVMRKIQEELDNVVGSNRMVDESDLVHLNYLRCVVRETFRMHPAGPFLIPHESVRATTINGYYIPAKTRVFINTHGLGRNTKIWDDVEDFRPERHWPVEGSGRVEISHGPDFKILPFSAGKRKCPGAPLGVTMVLMALARLFHCFEWSSPGNIDTVEVYGMTMPKAKPLRAIAKPRLAAHLYT.

Residues 2-22 (ILVLASLFAVLILNVLLWRWL) form a helical membrane-spanning segment. Cys451 is a binding site for heme.

The protein belongs to the cytochrome P450 family. Heme serves as cofactor.

It localises to the membrane. It catalyses the reaction dodecanoate + reduced [NADPH--hemoprotein reductase] + O2 = 7-hydroxydodecanoate + oxidized [NADPH--hemoprotein reductase] + H2O + H(+). In terms of biological role, involved in pollen wall development. Catalyzes the conversion of medium-chain saturated fatty acids to the corresponding monohydroxylated fatty acids, with a preferential hydroxylation of lauric acid at the C-7 position. In-chain hydroxylated fatty acids, together with omega-hydroxylated fatty acids, are key monomeric aliphatic building blocks for sporopollenin synthesis during exine formation. The sequence is that of Cytochrome P450 703A2 from Arabidopsis thaliana (Mouse-ear cress).